Consider the following 489-residue polypeptide: Zinc finger protein 772 (489 aa).

The KRAB domain occupies 27 to 98; the sequence is VNFEDVFVYF…DWVDMTLAVA (72 aa). 10 C2H2-type zinc fingers span residues 144–166, 172–194, 266–288, 294–316, 322–344, 350–372, 378–400, 406–428, 434–456, and 462–484; these read YPCG…QETH, YMCV…QKQH, YKCS…QRVH, YECG…QRIH, YECG…QRVH, YKCS…ESIH, YECS…WSVH, YECI…QRVH, YVCS…HRIH, and YKCS…WKIH.

It belongs to the krueppel C2H2-type zinc-finger protein family.

The protein localises to the nucleus. In terms of biological role, may be involved in transcriptional regulation. This Homo sapiens (Human) protein is Zinc finger protein 772 (ZNF772).